A 613-amino-acid chain; its full sequence is Serine/threonine-protein kinase pkpA (613 aa).

The Protein kinase domain occupies 17 to 269 (SKLNTVLGKG…AQEILEHRFL (253 aa)). ATP-binding positions include 23–31 (LGKGAYKVV) and Lys50. The active-site Proton acceptor is the Asp140. Disordered regions lie at residues 424–475 (LQPQ…STML) and 589–613 (VTQR…QELM). Over residues 427 to 441 (QPQPQPQPQPQPQPQ) the composition is skewed to pro residues. The span at 442 to 475 (PQFQLQPQLQYLSPQSTTSPGPTSDDNSTNSTML) shows a compositional bias: low complexity. The span at 592–602 (RGLQGTRSGAS) shows a compositional bias: polar residues.

The protein belongs to the protein kinase superfamily. Ser/Thr protein kinase family.

The catalysed reaction is L-seryl-[protein] + ATP = O-phospho-L-seryl-[protein] + ADP + H(+). It catalyses the reaction L-threonyl-[protein] + ATP = O-phospho-L-threonyl-[protein] + ADP + H(+). Serine/threonine protein kinase that probably participates as an intermediate in an intracellular system controlling nuclear proliferation. The sequence is that of Serine/threonine-protein kinase pkpA (pkpA) from Phycomyces blakesleeanus (strain ATCC 8743b / DSM 1359 / FGSC 10004 / NBRC 33097 / NRRL 1555).